Reading from the N-terminus, the 400-residue chain is Arrestin, lateral eye (400 aa).

The protein belongs to the arrestin family. Post-translationally, phosphorylated.

Plays an important role in the photoreceptor transduction. This chain is Arrestin, lateral eye, found in Limulus polyphemus (Atlantic horseshoe crab).